The chain runs to 133 residues: Putative esterase STK_17900 (133 aa).

It belongs to the thioesterase PaaI family.

This is Putative esterase STK_17900 from Sulfurisphaera tokodaii (strain DSM 16993 / JCM 10545 / NBRC 100140 / 7) (Sulfolobus tokodaii).